A 459-amino-acid chain; its full sequence is Vacuolar fusion protein CCZ1 homolog (459 aa).

This sequence belongs to the CCZ1 family.

The polypeptide is Vacuolar fusion protein CCZ1 homolog (Nematostella vectensis (Starlet sea anemone)).